We begin with the raw amino-acid sequence, 432 residues long: Methylenetetrahydrofolate--tRNA-(uracil-5-)-methyltransferase TrmFO (432 aa).

An FAD-binding site is contributed by 7–12 (GGGLAG).

Belongs to the MnmG family. TrmFO subfamily. It depends on FAD as a cofactor.

The protein resides in the cytoplasm. It carries out the reaction uridine(54) in tRNA + (6R)-5,10-methylene-5,6,7,8-tetrahydrofolate + NADH + H(+) = 5-methyluridine(54) in tRNA + (6S)-5,6,7,8-tetrahydrofolate + NAD(+). The catalysed reaction is uridine(54) in tRNA + (6R)-5,10-methylene-5,6,7,8-tetrahydrofolate + NADPH + H(+) = 5-methyluridine(54) in tRNA + (6S)-5,6,7,8-tetrahydrofolate + NADP(+). Its function is as follows. Catalyzes the folate-dependent formation of 5-methyl-uridine at position 54 (M-5-U54) in all tRNAs. The protein is Methylenetetrahydrofolate--tRNA-(uracil-5-)-methyltransferase TrmFO of Coprothermobacter proteolyticus (strain ATCC 35245 / DSM 5265 / OCM 4 / BT).